A 212-amino-acid chain; its full sequence is Interleukin-6 (212 aa).

The signal sequence occupies residues 1 to 27 (MNSFSTSAFGPVAFSLGLLLVLPAAFP). Cysteine 72 and cysteine 78 are joined by a disulfide. An N-linked (GlcNAc...) asparagine glycan is attached at asparagine 73. Position 81 is a phosphoserine (serine 81). An intrachain disulfide couples cysteine 101 to cysteine 111. Asparagine 172 carries N-linked (GlcNAc...) asparagine glycosylation.

Belongs to the IL-6 superfamily. In terms of assembly, component of a hexamer of two molecules each of IL6, IL6R and IL6ST; first binds to IL6R to associate with the signaling subunit IL6ST. Interacts with IL6R (via the N-terminal ectodomain); this interaction may be affected by IL6R-binding with SORL1, hence decreasing IL6 cis signaling. Interacts with SORL1 (via the N-terminal ectodomain); this interaction leads to IL6 internalization and lysosomal degradation. May form a trimeric complex with the soluble SORL1 ectodomain and soluble IL6R receptor; this interaction might stabilize circulating IL6, hence promoting IL6 trans signaling.

The protein localises to the secreted. Functionally, cytokine with a wide variety of biological functions in immunity, tissue regeneration, and metabolism. Binds to IL6R, then the complex associates to the signaling subunit IL6ST/gp130 to trigger the intracellular IL6-signaling pathway. The interaction with the membrane-bound IL6R and IL6ST stimulates 'classic signaling', whereas the binding of IL6 and soluble IL6R to IL6ST stimulates 'trans-signaling'. Alternatively, 'cluster signaling' occurs when membrane-bound IL6:IL6R complexes on transmitter cells activate IL6ST receptors on neighboring receiver cells. Its function is as follows. IL6 is a potent inducer of the acute phase response. Rapid production of IL6 contributes to host defense during infection and tissue injury, but excessive IL6 synthesis is involved in disease pathology. In the innate immune response, is synthesized by myeloid cells, such as macrophages and dendritic cells, upon recognition of pathogens through toll-like receptors (TLRs) at the site of infection or tissue injury. In the adaptive immune response, is required for the differentiation of B cells into immunoglobulin-secreting cells. Plays a major role in the differentiation of CD4(+) T cell subsets. Essential factor for the development of T follicular helper (Tfh) cells that are required for the induction of germinal-center formation. Required to drive naive CD4(+) T cells to the Th17 lineage. Also required for proliferation of myeloma cells and the survival of plasmablast cells. Acts as an essential factor in bone homeostasis and on vessels directly or indirectly by induction of VEGF, resulting in increased angiogenesis activity and vascular permeability. Induces, through 'trans-signaling' and synergistically with IL1B and TNF, the production of VEGF. Involved in metabolic controls, is discharged into the bloodstream after muscle contraction increasing lipolysis and improving insulin resistance. 'Trans-signaling' in central nervous system also regulates energy and glucose homeostasis. Mediates, through GLP-1, crosstalk between insulin-sensitive tissues, intestinal L cells and pancreatic islets to adapt to changes in insulin demand. Also acts as a myokine. Plays a protective role during liver injury, being required for maintenance of tissue regeneration. Also has a pivotal role in iron metabolism by regulating HAMP/hepcidin expression upon inflammation or bacterial infection. Through activation of IL6ST-YAP-NOTCH pathway, induces inflammation-induced epithelial regeneration. This chain is Interleukin-6 (IL6), found in Macaca mulatta (Rhesus macaque).